A 96-amino-acid polypeptide reads, in one-letter code: Co-chaperonin GroES (96 aa).

This sequence belongs to the GroES chaperonin family. As to quaternary structure, heptamer of 7 subunits arranged in a ring. Interacts with the chaperonin GroEL.

It localises to the cytoplasm. Together with the chaperonin GroEL, plays an essential role in assisting protein folding. The GroEL-GroES system forms a nano-cage that allows encapsulation of the non-native substrate proteins and provides a physical environment optimized to promote and accelerate protein folding. GroES binds to the apical surface of the GroEL ring, thereby capping the opening of the GroEL channel. The chain is Co-chaperonin GroES from Histophilus somni (strain 129Pt) (Haemophilus somnus).